A 464-amino-acid chain; its full sequence is Probable pectin lyase F (464 aa).

The first 20 residues, 1–20 (MAIIRSVIAATALLGAAVNA), serve as a signal peptide directing secretion. Cysteines 80 and 103 form a disulfide. N-linked (GlcNAc...) asparagine glycosylation occurs at N126. Residue R252 is part of the active site. C319 and C327 are disulfide-bonded. Positions 424–464 (EHEVSTPAVPTPTPVPSSVGSHGSTAGSSHPPAFSRTSFES) are disordered. Residues 439–448 (PSSVGSHGST) are compositionally biased toward low complexity.

It belongs to the polysaccharide lyase 1 family.

It localises to the secreted. The catalysed reaction is Eliminative cleavage of (1-&gt;4)-alpha-D-galacturonan methyl ester to give oligosaccharides with 4-deoxy-6-O-methyl-alpha-D-galact-4-enuronosyl groups at their non-reducing ends.. Pectinolytic enzymes consist of four classes of enzymes: pectin lyase, polygalacturonase, pectin methylesterase and rhamnogalacturonase. Among pectinolytic enzymes, pectin lyase is the most important in depolymerization of pectin, since it cleaves internal glycosidic bonds of highly methylated pectins. The protein is Probable pectin lyase F (pelF) of Emericella nidulans (strain FGSC A4 / ATCC 38163 / CBS 112.46 / NRRL 194 / M139) (Aspergillus nidulans).